The sequence spans 303 residues: 4-hydroxy-3-methylbut-2-enyl diphosphate reductase (303 aa).

Cys12 provides a ligand contact to [4Fe-4S] cluster. Residues His42 and His75 each contribute to the (2E)-4-hydroxy-3-methylbut-2-enyl diphosphate site. The dimethylallyl diphosphate site is built by His42 and His75. Isopentenyl diphosphate is bound by residues His42 and His75. [4Fe-4S] cluster is bound at residue Cys97. His125 contacts (2E)-4-hydroxy-3-methylbut-2-enyl diphosphate. A dimethylallyl diphosphate-binding site is contributed by His125. His125 is a binding site for isopentenyl diphosphate. The active-site Proton donor is the Glu127. Residue Ser164 coordinates (2E)-4-hydroxy-3-methylbut-2-enyl diphosphate. Cys192 is a [4Fe-4S] cluster binding site. (2E)-4-hydroxy-3-methylbut-2-enyl diphosphate is bound by residues Ser220, Ser221, Asn222, and Ser264. Residues Ser220, Ser221, Asn222, and Ser264 each coordinate dimethylallyl diphosphate. Isopentenyl diphosphate-binding residues include Ser220, Ser221, Asn222, and Ser264.

The protein belongs to the IspH family. Requires [4Fe-4S] cluster as cofactor.

It catalyses the reaction isopentenyl diphosphate + 2 oxidized [2Fe-2S]-[ferredoxin] + H2O = (2E)-4-hydroxy-3-methylbut-2-enyl diphosphate + 2 reduced [2Fe-2S]-[ferredoxin] + 2 H(+). The catalysed reaction is dimethylallyl diphosphate + 2 oxidized [2Fe-2S]-[ferredoxin] + H2O = (2E)-4-hydroxy-3-methylbut-2-enyl diphosphate + 2 reduced [2Fe-2S]-[ferredoxin] + 2 H(+). The protein operates within isoprenoid biosynthesis; dimethylallyl diphosphate biosynthesis; dimethylallyl diphosphate from (2E)-4-hydroxy-3-methylbutenyl diphosphate: step 1/1. It functions in the pathway isoprenoid biosynthesis; isopentenyl diphosphate biosynthesis via DXP pathway; isopentenyl diphosphate from 1-deoxy-D-xylulose 5-phosphate: step 6/6. Functionally, catalyzes the conversion of 1-hydroxy-2-methyl-2-(E)-butenyl 4-diphosphate (HMBPP) into a mixture of isopentenyl diphosphate (IPP) and dimethylallyl diphosphate (DMAPP). Acts in the terminal step of the DOXP/MEP pathway for isoprenoid precursor biosynthesis. The protein is 4-hydroxy-3-methylbut-2-enyl diphosphate reductase of Neorickettsia sennetsu (strain ATCC VR-367 / Miyayama) (Ehrlichia sennetsu).